A 273-amino-acid polypeptide reads, in one-letter code: Putative pyruvate, phosphate dikinase regulatory protein (273 aa).

149 to 156 (GPSRTSKT) serves as a coordination point for ADP.

This sequence belongs to the pyruvate, phosphate/water dikinase regulatory protein family. PDRP subfamily.

It carries out the reaction N(tele)-phospho-L-histidyl/L-threonyl-[pyruvate, phosphate dikinase] + ADP = N(tele)-phospho-L-histidyl/O-phospho-L-threonyl-[pyruvate, phosphate dikinase] + AMP + H(+). The enzyme catalyses N(tele)-phospho-L-histidyl/O-phospho-L-threonyl-[pyruvate, phosphate dikinase] + phosphate + H(+) = N(tele)-phospho-L-histidyl/L-threonyl-[pyruvate, phosphate dikinase] + diphosphate. Functionally, bifunctional serine/threonine kinase and phosphorylase involved in the regulation of the pyruvate, phosphate dikinase (PPDK) by catalyzing its phosphorylation/dephosphorylation. The polypeptide is Putative pyruvate, phosphate dikinase regulatory protein (Rickettsia africae (strain ESF-5)).